Consider the following 156-residue polypeptide: 6,7-dimethyl-8-ribityllumazine synthase (156 aa).

5-amino-6-(D-ribitylamino)uracil is bound by residues phenylalanine 23, 57–59, and 81–83; these read AFE and TVI. A (2S)-2-hydroxy-3-oxobutyl phosphate-binding site is contributed by 86-87; the sequence is ST. The Proton donor role is filled by histidine 89. Phenylalanine 114 contacts 5-amino-6-(D-ribitylamino)uracil. Arginine 128 provides a ligand contact to (2S)-2-hydroxy-3-oxobutyl phosphate.

It belongs to the DMRL synthase family. As to quaternary structure, forms an icosahedral capsid composed of 60 subunits, arranged as a dodecamer of pentamers.

It catalyses the reaction (2S)-2-hydroxy-3-oxobutyl phosphate + 5-amino-6-(D-ribitylamino)uracil = 6,7-dimethyl-8-(1-D-ribityl)lumazine + phosphate + 2 H2O + H(+). Its pathway is cofactor biosynthesis; riboflavin biosynthesis; riboflavin from 2-hydroxy-3-oxobutyl phosphate and 5-amino-6-(D-ribitylamino)uracil: step 1/2. Catalyzes the formation of 6,7-dimethyl-8-ribityllumazine by condensation of 5-amino-6-(D-ribitylamino)uracil with 3,4-dihydroxy-2-butanone 4-phosphate. This is the penultimate step in the biosynthesis of riboflavin. The sequence is that of 6,7-dimethyl-8-ribityllumazine synthase from Shouchella clausii (strain KSM-K16) (Alkalihalobacillus clausii).